Here is a 440-residue protein sequence, read N- to C-terminus: Xaa-Pro dipeptidase (440 aa).

The Mn(2+) site is built by Asp244, Asp255, His335, Glu380, and Glu419.

Belongs to the peptidase M24B family. Bacterial-type prolidase subfamily. The cofactor is Mn(2+).

The enzyme catalyses Xaa-L-Pro dipeptide + H2O = an L-alpha-amino acid + L-proline. Splits dipeptides with a prolyl residue in the C-terminal position. This Shewanella pealeana (strain ATCC 700345 / ANG-SQ1) protein is Xaa-Pro dipeptidase.